The chain runs to 690 residues: Methionine--tRNA ligase (690 aa).

Positions 20–30 (PYANGSIHLGH) match the 'HIGH' region motif. Zn(2+) contacts are provided by C151, C154, C164, and C167. Residues 337–341 (KMSKS) carry the 'KMSKS' region motif. K340 contributes to the ATP binding site. Residues 589–690 (DFAKVDLRIA…EGAQPGMRVM (102 aa)) enclose the tRNA-binding domain.

The protein belongs to the class-I aminoacyl-tRNA synthetase family. MetG type 1 subfamily. As to quaternary structure, homodimer. It depends on Zn(2+) as a cofactor.

The protein resides in the cytoplasm. It catalyses the reaction tRNA(Met) + L-methionine + ATP = L-methionyl-tRNA(Met) + AMP + diphosphate. Functionally, is required not only for elongation of protein synthesis but also for the initiation of all mRNA translation through initiator tRNA(fMet) aminoacylation. The protein is Methionine--tRNA ligase of Vibrio vulnificus (strain YJ016).